The sequence spans 207 residues: Enolase (207 aa).

A (2R)-2-phosphoglycerate-binding site is contributed by glutamine 162. The Proton donor role is filled by glutamate 204.

It belongs to the enolase family.

It localises to the cytoplasm. The protein localises to the secreted. It is found in the cell surface. It catalyses the reaction (2R)-2-phosphoglycerate = phosphoenolpyruvate + H2O. Its pathway is carbohydrate degradation; glycolysis; pyruvate from D-glyceraldehyde 3-phosphate: step 4/5. In terms of biological role, catalyzes the reversible conversion of 2-phosphoglycerate (2-PG) into phosphoenolpyruvate (PEP). It is essential for the degradation of carbohydrates via glycolysis. This Campylobacter fetus protein is Enolase.